The sequence spans 298 residues: Dioxygenase aneA (298 aa).

The Fe cation site is built by H134, D136, and H213.

The protein belongs to the PhyH family. As to quaternary structure, homodimer. The cofactor is Fe cation.

The enzyme catalyses aculene D + 2-oxoglutarate + O2 = aculene C + succinate + CO2 + H2O. It carries out the reaction aculene B + 2-oxoglutarate + O2 = aculene A + succinate + CO2 + H2O. It participates in secondary metabolite biosynthesis. In terms of biological role, dioxygenase; part of the gene cluster that mediates the biosynthesis of aculenes, a unique type of norsesquiterpenes that contain a nordaucane skeleton linked to an L-proline moiety and are of mixed biosynthetic origin. The pathway begins with the synthesis of dauca-4,7-diene by the terpene cyclase aneC using farnesyl pyrophosphate (FPP) as substrate. The cytochrome P450 monooxygenase aneF then performs the initial oxidation at C-12 of dauca-4,7-diene to yield asperaculane D. Asperaculane D is substrate of the cytochrome P450 monooxygenase aneD for C-10 hydroxylation to yield asperaculane E. The cytochrome P450 monooxygenase aneG then converts asperaculane E into aculene D via C-2 oxidation. The monomodular nonribosomal peptide synthase aneB adenylates L-proline and the thiohydrolase aneE transfers this activated L-proline derivative to aculenes D and C to produce respectively aculenes B and A. The dioxygenase aneA converts aculene D into aculene C, and aculene B into aculene A by introducing the 5,6-alkene moiety. Asperculanes A, B, C and F, as well as 14-prolyl asperculane C, might be shunt products of the pathway. This is Dioxygenase aneA from Aspergillus aculeatus (strain ATCC 16872 / CBS 172.66 / WB 5094).